A 184-amino-acid polypeptide reads, in one-letter code: MFSFVQRFQNVSNQAFSMGIVMVVFIMASSYYQLINNNAFSVPSNIDNVKTLINVRTSRYFGSQRGKAKENMKIKFDLNTDLTPLFNWNTKQVFVYLTAEYNSTEKITSEVTFWDKIIKSKDDAVIDVNDLRSKYSIWDIEDGKFEGKDLVFKLHWNVQPWVGLLTYGETVGNYTLTVENKNKV.

Over 1 to 14 the chain is Cytoplasmic; that stretch reads MFSFVQRFQNVSNQ. Residues 15 to 35 traverse the membrane as a helical; Signal-anchor for type II membrane protein segment; it reads AFSMGIVMVVFIMASSYYQLI. Topologically, residues 36–184 are lumenal; the sequence is NNNAFSVPSN…TLTVENKNKV (149 aa). 2 N-linked (GlcNAc...) asparagine glycosylation sites follow: asparagine 102 and asparagine 173.

This sequence belongs to the SPCS3 family. Component of the signal peptidase complex (SPC) composed of a catalytic subunit SEC11 and three accessory subunits SPC1, SPC2 and SPC3. The complex induces a local thinning of the ER membrane which is used to measure the length of the signal peptide (SP) h-region of protein substrates. This ensures the selectivity of the complex towards h-regions shorter than 18-20 amino acids. Interacts with SEC11. SPC associates with the translocon complex.

It is found in the endoplasmic reticulum membrane. Its function is as follows. Essential component of the signal peptidase complex (SPC) which catalyzes the cleavage of N-terminal signal sequences from nascent proteins as they are translocated into the lumen of the endoplasmic reticulum. Essential for the SPC catalytic activity, possibly by stabilizing and positioning the active center of the complex close to the lumenal surface. Essential for viability. In Saccharomyces cerevisiae (strain ATCC 204508 / S288c) (Baker's yeast), this protein is Signal peptidase complex subunit 3 (SPC3).